The following is a 528-amino-acid chain: 4-chlorobenzoate--CoA ligase (528 aa).

ATP contacts are provided by residues 161–169, 300–305, and Asn409; these read TSGTTGLPK and NIYGTT.

Belongs to the ATP-dependent AMP-binding enzyme family. As to quaternary structure, homodimer. The cofactor is Mg(2+).

It carries out the reaction 4-chlorobenzoate + ATP + CoA = 4-chlorobenzoyl-CoA + AMP + diphosphate. The protein operates within xenobiotic degradation; 4-chlorobenzoate degradation; 4-hydroxybenzoate from 4-chlorobenzoate: step 2/3. Its activity is regulated as follows. Unaffected by 5,5'-dithiobis-(2-nitrobenzoic acid), 4-chloromercuribenzoate and sodium azide. Inhibited by Cu(2+), Fe(2+) and Zn(2+). Unaffected by Na(+), K(+) and Li(+). Functionally, catalyzes the formation of chlorobenzoyl-CoA via a 2 step reaction. First 4-chlorobenzoyl is adenylated by ATP, followed by acyl transfer from the 4-chlorobenzoyl-AMP intermediate to CoA. Benzoate, 4-bromobenzoate, 4-iodobenzoate and 4-methylbenzoate also act as substrates. Inactive towards 4-aminobenzoate, 4-hydroxybenzoate, 2-aminobenzoate, 2,3-dihydroxybenzoate, 4-coumarate and the aliphatic carboxylic acids palmate, caproate, laurate and butyrate. Negligible activity is detected when ATP is replaced by UTP, CTP or GTP as cosubstrate. This chain is 4-chlorobenzoate--CoA ligase, found in Pseudomonas sp. (strain CBS-3).